The chain runs to 268 residues: L-gamma-glutamyl-L-propargylglycine hydroxylase (268 aa).

It depends on Fe(2+) as a cofactor.

It carries out the reaction L-gamma-glutamyl-L-propargylglycine + 2-oxoglutarate + O2 = L-gamma-glutamyl-(3R)-L-beta-ethynylserine + succinate + CO2. It participates in amino-acid metabolism. It functions in the pathway antibiotic biosynthesis. Functionally, involved in the biosynthesis of terminal alkyne-containing amino acids such as L-beta-ethynylserine, that are produced as antibiotics by S.cattleya. Catalyzes the hydroxylation of the dipeptide L-gamma-glutamyl-L-propargylglycine, leading to L-gamma-glutamyl-L-beta-ethynylserine. Cannot use L-propargylglycine as substrate. The chain is L-gamma-glutamyl-L-propargylglycine hydroxylase from Streptantibioticus cattleyicolor (strain ATCC 35852 / DSM 46488 / JCM 4925 / NBRC 14057 / NRRL 8057) (Streptomyces cattleya).